The chain runs to 618 residues: 1-deoxy-D-xylulose-5-phosphate synthase (618 aa).

Residues His-75 and 116–118 each bind thiamine diphosphate; that span reads GHS. Asp-147 provides a ligand contact to Mg(2+). Thiamine diphosphate-binding positions include 148-149, Asn-176, Tyr-283, and Glu-364; that span reads GA. A Mg(2+)-binding site is contributed by Asn-176.

The protein belongs to the transketolase family. DXPS subfamily. Homodimer. The cofactor is Mg(2+). It depends on thiamine diphosphate as a cofactor.

It catalyses the reaction D-glyceraldehyde 3-phosphate + pyruvate + H(+) = 1-deoxy-D-xylulose 5-phosphate + CO2. Its pathway is metabolic intermediate biosynthesis; 1-deoxy-D-xylulose 5-phosphate biosynthesis; 1-deoxy-D-xylulose 5-phosphate from D-glyceraldehyde 3-phosphate and pyruvate: step 1/1. Functionally, catalyzes the acyloin condensation reaction between C atoms 2 and 3 of pyruvate and glyceraldehyde 3-phosphate to yield 1-deoxy-D-xylulose-5-phosphate (DXP). The sequence is that of 1-deoxy-D-xylulose-5-phosphate synthase from Thiobacillus denitrificans (strain ATCC 25259 / T1).